The primary structure comprises 1139 residues: Protein lin-25 (1139 aa).

Residues 695-701 (IKKKKDP) carry the Nuclear localization signal motif.

Expressed in seam cells and all six vulva precursor cells (VPC). After VPC division, expression is restricted to descendants of the VPC cell lineages P5.p, P6.p and P7.p (at protein level).

The protein localises to the nucleus. It localises to the cytoplasm. Participates in the inductive signaling pathway downstream of let-60 Ras and the RAF/MAP kinase cascade to regulate specification and differentiation of many cell types. Positively regulates the fate of vulval precursor cells. Required for induction of the P12 and excretory duct cell fates. In males, it is also required for proper formation of spicules. Does not function in the signaling pathway that promotes exit from pachytene. Plays a role in responses to M.nematophilum-mediated bacterial infection by promoting tail swelling and preventing constipation. This Caenorhabditis elegans protein is Protein lin-25 (lin-25).